Consider the following 191-residue polypeptide: Uridylate kinase (191 aa).

12-17 (GAGKGT) contributes to the ATP binding site. The NMP stretch occupies residues 33-63 (SAGDCLREEQNRPGSKYGNLIKEYIKDGKIV). A ribonucleoside 5'-phosphate contacts are provided by residues arginine 39, 61-63 (KIV), 91-94 (GFPR), and glutamine 98. The segment at 128–138 (HRGKTSGRSDD) is LID. Arginine 129 lines the ATP pocket. The a ribonucleoside 5'-phosphate site is built by arginine 135 and arginine 146. Glutamine 174 provides a ligand contact to ATP.

It belongs to the adenylate kinase family. UMP-CMP kinase subfamily. Monomer. Mg(2+) serves as cofactor.

The protein localises to the cytoplasm. It localises to the nucleus. It catalyses the reaction UMP + ATP = UDP + ADP. Functionally, catalyzes the phosphorylation of pyrimidine nucleoside monophosphates at the expense of ATP. Plays an important role in de novo pyrimidine nucleotide biosynthesis. Has preference for UMP and dUMP as phosphate acceptors, but can also use CMP, dCMP and AMP. The polypeptide is Uridylate kinase (Schizosaccharomyces pombe (strain 972 / ATCC 24843) (Fission yeast)).